A 345-amino-acid polypeptide reads, in one-letter code: tRNA pseudouridine synthase B (345 aa).

Residue Asp39 is the Nucleophile of the active site.

Belongs to the pseudouridine synthase TruB family. Type 1 subfamily.

It carries out the reaction uridine(55) in tRNA = pseudouridine(55) in tRNA. In terms of biological role, responsible for synthesis of pseudouridine from uracil-55 in the psi GC loop of transfer RNAs. This Rickettsia africae (strain ESF-5) protein is tRNA pseudouridine synthase B.